The primary structure comprises 909 residues: Lon protease homolog 2, peroxisomal (909 aa).

One can recognise a Lon N-terminal domain in the interval 1 to 230; the sequence is MAPVRAPTAR…KVIELLDRQV (230 aa). The segment at 249-269 is disordered; the sequence is FPMDPDSTKPGKVKPPVKAPG. An ATP-binding site is contributed by 463 to 470; it reads GPPGVGKT. One can recognise a Lon proteolytic domain in the interval 706–893; that stretch reads TSRPGIVTGL…WEAIRYVWPD (188 aa). Active-site residues include Ser-799 and Lys-842. Positions 907-909 match the Microbody targeting signal motif; that stretch reads SRL.

It belongs to the peptidase S16 family.

It localises to the peroxisome matrix. The protein resides in the cytoplasm. The enzyme catalyses Hydrolysis of proteins in presence of ATP.. ATP-dependent serine protease that mediates the selective degradation of misfolded and unassembled polypeptides in the peroxisomal matrix. Necessary for type 2 peroxisome targeting signal (PTS2)-containing protein processing and facilitates peroxisome matrix protein import. The sequence is that of Lon protease homolog 2, peroxisomal from Sordaria macrospora (strain ATCC MYA-333 / DSM 997 / K(L3346) / K-hell).